A 156-amino-acid polypeptide reads, in one-letter code: Ribonuclease pancreatic (156 aa).

The signal sequence occupies residues 1 to 28 (MALEKSLVLLPLFVLMLLVLGWVQPSLG). Lysine 35 and arginine 38 together coordinate substrate. Histidine 40 functions as the Proton acceptor in the catalytic mechanism. N-linked (GlcNAc...) asparagine glycosylation is found at asparagine 50 and asparagine 62. 4 cysteine pairs are disulfide-bonded: cysteine 54–cysteine 112, cysteine 68–cysteine 123, cysteine 86–cysteine 138, and cysteine 93–cysteine 100. Substrate-binding positions include 69 to 73 (KPVNT) and lysine 94. N-linked (GlcNAc...) asparagine glycosylation is present at asparagine 104. Arginine 113 contacts substrate. Residue asparagine 116 is glycosylated (N-linked (GlcNAc...) asparagine). The active-site Proton donor is histidine 147.

This sequence belongs to the pancreatic ribonuclease family. Monomer. Interacts with and forms tight 1:1 complexes with RNH1. Dimerization of two such complexes may occur. Interaction with RNH1 inhibits this protein.

The protein resides in the secreted. It carries out the reaction an [RNA] containing cytidine + H2O = an [RNA]-3'-cytidine-3'-phosphate + a 5'-hydroxy-ribonucleotide-3'-[RNA].. The enzyme catalyses an [RNA] containing uridine + H2O = an [RNA]-3'-uridine-3'-phosphate + a 5'-hydroxy-ribonucleotide-3'-[RNA].. In terms of biological role, endonuclease that catalyzes the cleavage of RNA on the 3' side of pyrimidine nucleotides. Acts on single-stranded and double-stranded RNA. The sequence is that of Ribonuclease pancreatic (RNASE1) from Nomascus leucogenys (Northern white-cheeked gibbon).